The primary structure comprises 545 residues: Ribulokinase (545 aa).

This sequence belongs to the ribulokinase family.

It catalyses the reaction D-ribulose + ATP = D-ribulose 5-phosphate + ADP + H(+). The enzyme catalyses L-ribulose + ATP = L-ribulose 5-phosphate + ADP + H(+). Its pathway is carbohydrate degradation; L-arabinose degradation via L-ribulose; D-xylulose 5-phosphate from L-arabinose (bacterial route): step 2/3. This chain is Ribulokinase, found in Staphylococcus aureus (strain MRSA252).